The chain runs to 443 residues: Mitochondrial enolase superfamily member 1 (443 aa).

Substrate-binding positions include 24 to 26 (GSD) and tyrosine 34. Serine 148 carries the post-translational modification Phosphoserine. Residue lysine 220 coordinates substrate. The active-site Proton donor/acceptor is lysine 222. Residue aspartate 250 coordinates Mg(2+). Substrate-binding positions include asparagine 252, glutamate 276, glutamate 305, 355–357 (HAG), and glutamate 386. Mg(2+) is bound by residues glutamate 276 and glutamate 305. The active site involves histidine 355.

Belongs to the mandelate racemase/muconate lactonizing enzyme family. ENOSF1 subfamily. It depends on Mg(2+) as a cofactor. Could be sumoylated.

Its subcellular location is the mitochondrion. It catalyses the reaction L-fuconate = 2-dehydro-3-deoxy-L-fuconate + H2O. Plays a role in the catabolism of L-fucose, a sugar that is part of the carbohydrates that are attached to cellular glycoproteins. Catalyzes the dehydration of L-fuconate to 2-keto-3-deoxy-L-fuconate by the abstraction of the 2-proton to generate an enediolate intermediate that is stabilized by the magnesium ion. May down-regulate thymidylate synthase activity, possibly already at the RNA level, by promoting the degradation of TYMS mRNA via an antisense RNA-based mechanism. This Pongo abelii (Sumatran orangutan) protein is Mitochondrial enolase superfamily member 1 (ENOSF1).